Consider the following 446-residue polypeptide: Tubulin beta-4 chain (446 aa).

The GTP site is built by Gln11, Glu69, Ser138, Gly142, Thr143, Gly144, Asn204, and Asn226. Glu69 is a binding site for Mg(2+). Residues 417-426 show a composition bias toward polar residues; that stretch reads DLVSEYQQYQ. Residues 417–446 are disordered; it reads DLVSEYQQYQDATADEEGDYEDEDEALHDE. Positions 429-446 are enriched in acidic residues; sequence TADEEGDYEDEDEALHDE.

Belongs to the tubulin family. In terms of assembly, dimer of alpha and beta chains. A typical microtubule is a hollow water-filled tube with an outer diameter of 25 nm and an inner diameter of 15 nM. Alpha-beta heterodimers associate head-to-tail to form protofilaments running lengthwise along the microtubule wall with the beta-tubulin subunit facing the microtubule plus end conferring a structural polarity. Microtubules usually have 13 protofilaments but different protofilament numbers can be found in some organisms and specialized cells. Requires Mg(2+) as cofactor.

The protein resides in the cytoplasm. It is found in the cytoskeleton. Tubulin is the major constituent of microtubules, a cylinder consisting of laterally associated linear protofilaments composed of alpha- and beta-tubulin heterodimers. Microtubules grow by the addition of GTP-tubulin dimers to the microtubule end, where a stabilizing cap forms. Below the cap, tubulin dimers are in GDP-bound state, owing to GTPase activity of alpha-tubulin. In Eleusine indica (Goosegrass), this protein is Tubulin beta-4 chain (TUBB4).